A 78-amino-acid chain; its full sequence is UPF0349 protein BH3414 (78 aa).

It belongs to the UPF0349 family.

The sequence is that of UPF0349 protein BH3414 from Halalkalibacterium halodurans (strain ATCC BAA-125 / DSM 18197 / FERM 7344 / JCM 9153 / C-125) (Bacillus halodurans).